A 600-amino-acid polypeptide reads, in one-letter code: DDB1- and CUL4-associated factor 8-like protein 1 (600 aa).

The segment at 1 to 122 (MSHQEGSTGG…EEEQPRMCPR (122 aa)) is disordered. Composition is skewed to acidic residues over residues 74-83 (SSSEDVELES) and 96-115 (EETE…EEEE). WD repeat units follow at residues 194–233 (SHAG…PVLN), 237–278 (GHDI…YCEN), 284–324 (KHRG…PASK), 332–372 (DKKV…KKEN), 388–427 (DFPT…GAQY), 435–475 (RNND…IIQF), and 479–518 (DRGD…ATEL). The disordered stretch occupies residues 562–600 (PGWRDHGAEFPDEEELDESSSTSDTSEEEGQDRVQCIPS).

This sequence belongs to the WD repeat DCAF8 family.

This chain is DDB1- and CUL4-associated factor 8-like protein 1 (DCAF8L1), found in Homo sapiens (Human).